The chain runs to 495 residues: MRQIVPKVVVVGAGMGGLASAIRLARAGCEVTLLEAREAPGGRMRTLPSVAGPVDAGPTVLTLREVFDDIFEVCGQKLDHHLTLLPQPLLARHWWLDGSTLDLTTDLEANVEAVAAFAGAREARAFRRFHDLSARLYDAFDRPMMRAARPDLRAIATGALKAPRTWPALLPGMTLDRLLRLFFRDRRLRQLFGRYATYVGGTPYGAPGVLALIWAAEARGVWAIEGGMHRLALALARLADDQGVRLRYGAPVARILRQGGRATGVQLADGRTLPADHIVFNGDPAALLAGCLGDGPQDAVPEDRIHPRSLSAWVWSYAARASGPPLVHHNVFFADDPRREFGPIAAGQMPEDATLYICAEDRSGGQLPDGPERFEIIMNGPPGRPAKPEDFAQCRSRTFDRLRQFGLTFDPVPGETSLTAPSGFASLFPASQGSIYGLSPHGALASLKRPLARTALPGLWLAGGGAHPGAGVPMAALSGRHAAEAILADLASRSR.

Belongs to the carotenoid/retinoid oxidoreductase family.

It carries out the reaction rhodopin + A = (3E)-3,4-didehydrorhodopin + AH2. Its pathway is carotenoid biosynthesis; spheroidene biosynthesis. Functionally, catalyzes the introduction of C-3,4 double bonds into 1-hydroxyneurosporene (1-HO-Neu) to yield demethylspheroidene (DMS). It prefer the acyclic carotenoids such as 1-hydroxylycopene, and 1-hydroxy-gamma-carotene, whereas 1-hydroxy-3,4-didehydrolycopene and 1,1-dihydroxylycopene are much less effective. The protein is Hydroxyneurosporene desaturase (crtD) of Cereibacter sphaeroides (strain ATCC 17023 / DSM 158 / JCM 6121 / CCUG 31486 / LMG 2827 / NBRC 12203 / NCIMB 8253 / ATH 2.4.1.) (Rhodobacter sphaeroides).